Here is a 317-residue protein sequence, read N- to C-terminus: D-alanine--D-alanine ligase (317 aa).

An ATP-grasp domain is found at 104-303 (KRVWLQHGLP…YAELCVAILA (200 aa)). 130–185 (PDRLGLPLILKPPHEGSTVGITKVAACADMEQAYAAASHFDEVVLAEQFVRGRELT) serves as a coordination point for ATP. Asp-257, Glu-270, and Asn-272 together coordinate Mg(2+).

Belongs to the D-alanine--D-alanine ligase family. Mg(2+) serves as cofactor. The cofactor is Mn(2+).

The protein localises to the cytoplasm. The catalysed reaction is 2 D-alanine + ATP = D-alanyl-D-alanine + ADP + phosphate + H(+). It participates in cell wall biogenesis; peptidoglycan biosynthesis. Its function is as follows. Cell wall formation. In Bordetella avium (strain 197N), this protein is D-alanine--D-alanine ligase.